A 295-amino-acid polypeptide reads, in one-letter code: N-acetylmuramic acid 6-phosphate etherase (295 aa).

The 164-residue stretch at 53–216 (TTEQFKQGGR…STITMVGVGK (164 aa)) folds into the SIS domain. Glu81 (proton donor) is an active-site residue. The active site involves Glu112.

Belongs to the GCKR-like family. MurNAc-6-P etherase subfamily. As to quaternary structure, homodimer.

The catalysed reaction is N-acetyl-D-muramate 6-phosphate + H2O = N-acetyl-D-glucosamine 6-phosphate + (R)-lactate. The protein operates within amino-sugar metabolism; N-acetylmuramate degradation. Functionally, specifically catalyzes the cleavage of the D-lactyl ether substituent of MurNAc 6-phosphate, producing GlcNAc 6-phosphate and D-lactate. The polypeptide is N-acetylmuramic acid 6-phosphate etherase (Staphylococcus saprophyticus subsp. saprophyticus (strain ATCC 15305 / DSM 20229 / NCIMB 8711 / NCTC 7292 / S-41)).